Here is a 431-residue protein sequence, read N- to C-terminus: D-tagatose-1,6-bisphosphate aldolase subunit KbaZ (431 aa).

Belongs to the GatZ/KbaZ family. KbaZ subfamily. In terms of assembly, forms a complex with KbaY.

Its pathway is carbohydrate metabolism; D-tagatose 6-phosphate degradation; D-glyceraldehyde 3-phosphate and glycerone phosphate from D-tagatose 6-phosphate: step 2/2. Component of the tagatose-1,6-bisphosphate aldolase KbaYZ that is required for full activity and stability of the Y subunit. Could have a chaperone-like function for the proper and stable folding of KbaY. When expressed alone, KbaZ does not show any aldolase activity. In Citrobacter koseri (strain ATCC BAA-895 / CDC 4225-83 / SGSC4696), this protein is D-tagatose-1,6-bisphosphate aldolase subunit KbaZ.